The following is a 118-amino-acid chain: Large ribosomal subunit protein bL19 (118 aa).

It belongs to the bacterial ribosomal protein bL19 family.

This protein is located at the 30S-50S ribosomal subunit interface and may play a role in the structure and function of the aminoacyl-tRNA binding site. This is Large ribosomal subunit protein bL19 from Campylobacter jejuni subsp. jejuni serotype O:6 (strain 81116 / NCTC 11828).